The sequence spans 159 residues: 16 kDa outer membrane lipoprotein (159 aa).

The N-terminal stretch at 1-21 (MNKKIFTLFLVVAASAIFAVS) is a signal peptide. C22 carries N-palmitoyl cysteine lipidation. Residue C22 is the site of S-diacylglycerol cysteine attachment.

Its subcellular location is the cell outer membrane. This chain is 16 kDa outer membrane lipoprotein (smpA), found in Brachyspira hyodysenteriae (Treponema hyodysenteriae).